Reading from the N-terminus, the 237-residue chain is Phosphoribosylaminoimidazole-succinocarboxamide synthase (237 aa).

Belongs to the SAICAR synthetase family.

It carries out the reaction 5-amino-1-(5-phospho-D-ribosyl)imidazole-4-carboxylate + L-aspartate + ATP = (2S)-2-[5-amino-1-(5-phospho-beta-D-ribosyl)imidazole-4-carboxamido]succinate + ADP + phosphate + 2 H(+). It participates in purine metabolism; IMP biosynthesis via de novo pathway; 5-amino-1-(5-phospho-D-ribosyl)imidazole-4-carboxamide from 5-amino-1-(5-phospho-D-ribosyl)imidazole-4-carboxylate: step 1/2. This chain is Phosphoribosylaminoimidazole-succinocarboxamide synthase, found in Cronobacter sakazakii (strain ATCC BAA-894) (Enterobacter sakazakii).